The chain runs to 478 residues: DNA gyrase subunit B (478 aa).

The region spanning Cys319 to Pro438 is the Toprim domain. Mg(2+) is bound by residues Glu325, Asp403, and Asp405.

Belongs to the type II topoisomerase GyrB family. Heterotetramer, composed of two GyrA and two GyrB chains. In the heterotetramer, GyrA contains the active site tyrosine that forms a transient covalent intermediate with DNA, while GyrB binds cofactors and catalyzes ATP hydrolysis. The cofactor is Mg(2+). Mn(2+) serves as cofactor. Ca(2+) is required as a cofactor.

Its subcellular location is the cytoplasm. The enzyme catalyses ATP-dependent breakage, passage and rejoining of double-stranded DNA.. Functionally, a type II topoisomerase that negatively supercoils closed circular double-stranded (ds) DNA in an ATP-dependent manner to modulate DNA topology and maintain chromosomes in an underwound state. Negative supercoiling favors strand separation, and DNA replication, transcription, recombination and repair, all of which involve strand separation. Also able to catalyze the interconversion of other topological isomers of dsDNA rings, including catenanes and knotted rings. Type II topoisomerases break and join 2 DNA strands simultaneously in an ATP-dependent manner. The sequence is that of DNA gyrase subunit B (gyrB) from Cytophaga aurantiaca.